The sequence spans 323 residues: MRRAIVRGTGHYLPERVVENSWFEDKLDTSDEWIRARTGIERRHFAAEDQRTSDLGILAAQAALADAGLEAAQIDAVIVATSTPDLTFPSVATMVQAGLGMRHGFAYDLQAVCAGFVYALANADALIRAGLADRVLLIGAETFSRIMDWTDRGTCVLFGDGAGAVVLEAAEGQGSSADRGILATDLNSDGQYRDLLYVDGGVASTGTAGHLRMQGNLVFRHAVEKLADTAHRALDRAGLTPDQVDWLVPHQANLRIIEATAKRMHLPMEKVVLTVADHGNTSAASIPLALSVANAEGRFKPGDLLVAEAIGGGLAWGSVVLRW.

Residues Cys113 and His250 contribute to the active site. An ACP-binding region spans residues 251-255 (QANLR). Asn280 is a catalytic residue.

Belongs to the thiolase-like superfamily. FabH family. Homodimer.

It localises to the cytoplasm. It carries out the reaction malonyl-[ACP] + acetyl-CoA + H(+) = 3-oxobutanoyl-[ACP] + CO2 + CoA. The protein operates within lipid metabolism; fatty acid biosynthesis. Functionally, catalyzes the condensation reaction of fatty acid synthesis by the addition to an acyl acceptor of two carbons from malonyl-ACP. Catalyzes the first condensation reaction which initiates fatty acid synthesis and may therefore play a role in governing the total rate of fatty acid production. Possesses both acetoacetyl-ACP synthase and acetyl transacylase activities. Its substrate specificity determines the biosynthesis of branched-chain and/or straight-chain of fatty acids. The protein is Beta-ketoacyl-[acyl-carrier-protein] synthase III of Paracoccus denitrificans (strain Pd 1222).